Consider the following 210-residue polypeptide: Uracil phosphoribosyltransferase (210 aa).

5-phospho-alpha-D-ribose 1-diphosphate is bound by residues Arg78, Arg103, and 130–138 (DPMLATGGS). Residues Ile193 and 198–200 (GDA) contribute to the uracil site. Asp199 contributes to the 5-phospho-alpha-D-ribose 1-diphosphate binding site.

This sequence belongs to the UPRTase family. Mg(2+) serves as cofactor.

The catalysed reaction is UMP + diphosphate = 5-phospho-alpha-D-ribose 1-diphosphate + uracil. The protein operates within pyrimidine metabolism; UMP biosynthesis via salvage pathway; UMP from uracil: step 1/1. Its activity is regulated as follows. Allosterically activated by GTP. In terms of biological role, catalyzes the conversion of uracil and 5-phospho-alpha-D-ribose 1-diphosphate (PRPP) to UMP and diphosphate. In Laribacter hongkongensis (strain HLHK9), this protein is Uracil phosphoribosyltransferase.